The sequence spans 336 residues: Telomere-binding protein cav (336 aa).

Positions 107-328 (RKKMVQPYPE…TITFQNSESE (222 aa)) are required for binding to Su(var)205. 2 disordered regions span residues 137-158 (RLDR…SPAR) and 199-218 (SSDL…SEFQ). 2 short sequence motifs (su(var)205-binding Pro-containing repeat) span residues 225–231 (PETAINE) and 289–295 (PETEMNE). Positions 308-327 (MSIGPSIDSEGTITFQNSES) are enriched in polar residues. Residues 308 to 336 (MSIGPSIDSEGTITFQNSESEPIDVDSIA) are disordered.

As to quaternary structure, interacts (via C-terminus) with Su(var)205 dimer (via hinge and chromoshadow domain) and with moi to form the terminin, telomere-capping, complex. Interacts with HP6, which is also part of the terminin complex.

It is found in the nucleus. The protein localises to the chromosome. The protein resides in the telomere. In terms of biological role, binds to chromosome ends in a sequence-dependent manner and is required for telomere capping. The chain is Telomere-binding protein cav from Drosophila sechellia (Fruit fly).